We begin with the raw amino-acid sequence, 380 residues long: Cytochrome b (380 aa).

Transmembrane regions (helical) follow at residues 33 to 53 (FGSLLGLCLITQIATGLFLAM), 77 to 98 (WLIRNLHANGASFFFICIYLHI), 113 to 133 (WNVGVILLLLVMMTAFVGYVL), and 178 to 198 (FFAFHFLLPFIIAAATVIHLL). Heme b-binding residues include His-83 and His-97. Residues His-182 and His-196 each contribute to the heme b site. Residue His-201 coordinates a ubiquinone. 4 consecutive transmembrane segments (helical) span residues 226 to 246 (YKDLLGFAALLIALTSLALFS), 288 to 308 (LGGVLALLFSILVLMLVPILH), 320 to 340 (ITQFLFWTLVADVIILTWIGG), and 347 to 367 (FIIIGQIASFLYFFLFLVLTP).

It belongs to the cytochrome b family. As to quaternary structure, the cytochrome bc1 complex contains 3 respiratory subunits (MT-CYB, CYC1 and UQCRFS1), 2 core proteins (UQCRC1 and UQCRC2) and probably 6 low-molecular weight proteins. Requires heme b as cofactor.

The protein resides in the mitochondrion inner membrane. Functionally, component of the ubiquinol-cytochrome c reductase complex (complex III or cytochrome b-c1 complex) that is part of the mitochondrial respiratory chain. The b-c1 complex mediates electron transfer from ubiquinol to cytochrome c. Contributes to the generation of a proton gradient across the mitochondrial membrane that is then used for ATP synthesis. In Dactyloptena peterseni (Starry flying gurnard), this protein is Cytochrome b (mt-cyb).